Consider the following 122-residue polypeptide: Large ribosomal subunit protein uL14 (122 aa).

It belongs to the universal ribosomal protein uL14 family. Part of the 50S ribosomal subunit. Forms a cluster with proteins L3 and L19. In the 70S ribosome, L14 and L19 interact and together make contacts with the 16S rRNA in bridges B5 and B8.

In terms of biological role, binds to 23S rRNA. Forms part of two intersubunit bridges in the 70S ribosome. The chain is Large ribosomal subunit protein uL14 from Neisseria meningitidis serogroup C (strain 053442).